Here is a 159-residue protein sequence, read N- to C-terminus: Phosphopantetheine adenylyltransferase (159 aa).

Residue Ser-9 participates in substrate binding. ATP is bound by residues 9 to 10 (SF) and His-17. Lys-41, Leu-73, and Lys-87 together coordinate substrate. ATP is bound by residues 88 to 90 (GLR), Glu-98, and 123 to 129 (YGYLSSS).

It belongs to the bacterial CoaD family. In terms of assembly, homohexamer. Requires Mg(2+) as cofactor.

It localises to the cytoplasm. It carries out the reaction (R)-4'-phosphopantetheine + ATP + H(+) = 3'-dephospho-CoA + diphosphate. It functions in the pathway cofactor biosynthesis; coenzyme A biosynthesis; CoA from (R)-pantothenate: step 4/5. Functionally, reversibly transfers an adenylyl group from ATP to 4'-phosphopantetheine, yielding dephospho-CoA (dPCoA) and pyrophosphate. The protein is Phosphopantetheine adenylyltransferase of Thermoanaerobacter pseudethanolicus (strain ATCC 33223 / 39E) (Clostridium thermohydrosulfuricum).